Here is a 767-residue protein sequence, read N- to C-terminus: MFCLLLGSTAPSVGAVPAKKEPQPPPMTPLEKRLLDMGPIREDGSDKFYGMENYGNTCYCNSILQCLYYSVPFREAVINYPTRTPIESLEAALAKSLRYPNPNAQLEAEAQAEKQKAANAQRPGMPPNPQQKPEDKDSPEYKKKMALQTLPLLETQNNASSYGMSESLFTSLKDIFESVVGSQSRIGIIRPQQFLEVLRRDHEMFRTAMHQDAHEFLNLLLNEVVANVEAEASKQPPIEKSLPAPETADSVDQSSSTGSKTPNTTRWVHELFEGLLTSETQCLTCEKVSQRDEVFLDLSVDLEQHSSVTSCLRKFSAEEMLCERNKFHCDNCGGLQEAEKRMKIKRLPRILALHLKRFKYTEDLQRLQKLFHRVVYPYHLRLFNTTDDAEDPDRLYELYAVVVHIGGGPYHGHYVAIIKTEDRGWLLFDDEMVEPVDKNYVKNFFGDKPGLACAYVLFYQETTLEAVLKEQEQENMDSNLAATDANDTILKQNGFPQSPLAHVHSASQIPSHEDNLRPNGLRRAPTAPQLSTHHEHGDPESAPFSPLSPLSPLSQTPPVPPVPERVTTVATPPKNDALAKKERAREEKERKAAEKEREKAEKLRRKEQEARMKENQRREEAELKAALEMSKASKAEEDRRLSHENGKEKQGGSLSRLKRGSKSLSHRLGKDKETRSVSSDLPPVPIPEHSTLSQTGPTSEQQQQQQQQQQQQQSPPNHDQPPNSPQLGKPTIREDEQVNHKDSKHERTGHGKWRSFSLRKKSFSILS.

One can recognise a USP domain in the interval 49-462; the sequence is YGMENYGNTC…CAYVLFYQET (414 aa). The Nucleophile role is filled by Cys-58. Disordered stretches follow at residues 107–140 and 232–263; these read EAEA…DSPE and ASKQ…KTPN. Polar residues predominate over residues 250-263; the sequence is SVDQSSSTGSKTPN. Catalysis depends on His-413, which acts as the Proton acceptor. The interval 490–767 is disordered; the sequence is LKQNGFPQSP…LRKKSFSILS (278 aa). Low complexity-rich tracts occupy residues 540–554 and 564–573; these read ESAP…SPLS and ERVTTVATPP. Residues 574 to 641 adopt a coiled-coil conformation; that stretch reads KNDALAKKER…ASKAEEDRRL (68 aa). Residues 577 to 650 show a composition bias toward basic and acidic residues; that stretch reads ALAKKERARE…LSHENGKEKQ (74 aa). Positions 656–667 are enriched in basic residues; sequence RLKRGSKSLSHR. Positions 690 to 700 are enriched in polar residues; sequence STLSQTGPTSE. The span at 701–713 shows a compositional bias: low complexity; it reads QQQQQQQQQQQQQ. Over residues 731-749 the composition is skewed to basic and acidic residues; that stretch reads TIREDEQVNHKDSKHERTG. A compositionally biased stretch (basic residues) spans 750–767; sequence HGKWRSFSLRKKSFSILS.

Belongs to the peptidase C19 family. In terms of assembly, interacts with creA, creC and qutD.

It catalyses the reaction Thiol-dependent hydrolysis of ester, thioester, amide, peptide and isopeptide bonds formed by the C-terminal Gly of ubiquitin (a 76-residue protein attached to proteins as an intracellular targeting signal).. Ubiquitin thioesterase component of the regulatory network controlling carbon source utilization through ubiquitination and deubiquitination involving creA, creB, creC, creD and acrB. Deubiquitinates the creA catabolic repressor and the quinate permease qutD. Also plays a role in response to carbon starvation and the control of extracellular proteases activity. The chain is Probable ubiquitin carboxyl-terminal hydrolase creB (creB) from Aspergillus fumigatus (strain CBS 144.89 / FGSC A1163 / CEA10) (Neosartorya fumigata).